Reading from the N-terminus, the 357-residue chain is Selenide, water dikinase (357 aa).

The active site involves cysteine 25. ATP is bound by residues lysine 28 and 57–59 (TAD). Aspartate 60 is a Mg(2+) binding site. Residues aspartate 77, aspartate 100, and 148-150 (GHS) each bind ATP. Aspartate 100 provides a ligand contact to Mg(2+). Aspartate 236 is a binding site for Mg(2+).

It belongs to the selenophosphate synthase 1 family. Class I subfamily. As to quaternary structure, homodimer. It depends on Mg(2+) as a cofactor.

The catalysed reaction is hydrogenselenide + ATP + H2O = selenophosphate + AMP + phosphate + 2 H(+). Its function is as follows. Synthesizes selenophosphate from selenide and ATP. This Pseudomonas straminea protein is Selenide, water dikinase.